The chain runs to 471 residues: Tryptophanase (471 aa).

At Lys-270 the chain carries N6-(pyridoxal phosphate)lysine.

This sequence belongs to the beta-eliminating lyase family. In terms of assembly, homotetramer. It depends on pyridoxal 5'-phosphate as a cofactor.

It catalyses the reaction L-tryptophan + H2O = indole + pyruvate + NH4(+). The protein operates within amino-acid degradation; L-tryptophan degradation via pyruvate pathway; indole and pyruvate from L-tryptophan: step 1/1. In Histophilus somni (strain 129Pt) (Haemophilus somnus), this protein is Tryptophanase.